The primary structure comprises 320 residues: Protein rlx (320 aa).

Its function is as follows. This protein is probably required for relaxation complex formation and plasmid mobilization by conjugative plasmids. This is Protein rlx (rlx) from Staphylococcus aureus.